We begin with the raw amino-acid sequence, 207 residues long: Imidazole glycerol phosphate synthase subunit HisH (207 aa).

The Glutamine amidotransferase type-1 domain maps to 1–207 (MIAIVDYNMG…ENFTKYRNLK (207 aa)). The Nucleophile role is filled by C79. Residues H185 and E187 contribute to the active site.

Heterodimer of HisH and HisF.

The protein resides in the cytoplasm. The enzyme catalyses 5-[(5-phospho-1-deoxy-D-ribulos-1-ylimino)methylamino]-1-(5-phospho-beta-D-ribosyl)imidazole-4-carboxamide + L-glutamine = D-erythro-1-(imidazol-4-yl)glycerol 3-phosphate + 5-amino-1-(5-phospho-beta-D-ribosyl)imidazole-4-carboxamide + L-glutamate + H(+). The catalysed reaction is L-glutamine + H2O = L-glutamate + NH4(+). Its pathway is amino-acid biosynthesis; L-histidine biosynthesis; L-histidine from 5-phospho-alpha-D-ribose 1-diphosphate: step 5/9. Functionally, IGPS catalyzes the conversion of PRFAR and glutamine to IGP, AICAR and glutamate. The HisH subunit catalyzes the hydrolysis of glutamine to glutamate and ammonia as part of the synthesis of IGP and AICAR. The resulting ammonia molecule is channeled to the active site of HisF. In Sulfurimonas denitrificans (strain ATCC 33889 / DSM 1251) (Thiomicrospira denitrificans (strain ATCC 33889 / DSM 1251)), this protein is Imidazole glycerol phosphate synthase subunit HisH.